We begin with the raw amino-acid sequence, 195 residues long: Recombination protein RecR (195 aa).

The segment at 53–68 adopts a C4-type zinc-finger fold; the sequence is CSVCFNIDVKSPCSIC. The region spanning 76-171 is the Toprim domain; it reads QLLCIVEELG…KITRLACGIP (96 aa).

It belongs to the RecR family.

Functionally, may play a role in DNA repair. It seems to be involved in an RecBC-independent recombinational process of DNA repair. It may act with RecF and RecO. This is Recombination protein RecR from Ehrlichia canis (strain Jake).